A 142-amino-acid chain; its full sequence is Hemoglobin subunit alpha (142 aa).

Positions 1-142 (GLTAADKTLI…VEKALFETYR (142 aa)) constitute a Globin domain. His-59 is a binding site for O2. His-88 lines the heme b pocket.

This sequence belongs to the globin family. Heterotetramer of two alpha chains and two beta chains (an easy dimerization is also reported). Red blood cells.

Its function is as follows. Involved in oxygen transport from the lung to the various peripheral tissues. This chain is Hemoglobin subunit alpha (HBA), found in Latimeria chalumnae (Coelacanth).